The primary structure comprises 213 residues: Cytochrome c biogenesis ATP-binding export protein CcmA (213 aa).

Residues 11–213 (LTARNLECIR…TVTVHHLVLS (203 aa)) enclose the ABC transporter domain. 43 to 50 (GPNGSGKT) contacts ATP.

It belongs to the ABC transporter superfamily. CcmA exporter (TC 3.A.1.107) family. The complex is composed of two ATP-binding proteins (CcmA) and two transmembrane proteins (CcmB).

Its subcellular location is the cell inner membrane. The catalysed reaction is heme b(in) + ATP + H2O = heme b(out) + ADP + phosphate + H(+). Functionally, part of the ABC transporter complex CcmAB involved in the biogenesis of c-type cytochromes; once thought to export heme, this seems not to be the case, but its exact role is uncertain. Responsible for energy coupling to the transport system. This chain is Cytochrome c biogenesis ATP-binding export protein CcmA, found in Nitrosomonas europaea (strain ATCC 19718 / CIP 103999 / KCTC 2705 / NBRC 14298).